Consider the following 202-residue polypeptide: Securin (202 aa).

The tract at residues 36 to 55 is disordered; that stretch reads DGRSQVSTPHVGKMFDAPPA. Residues 61–64 carry the D-box motif; that stretch reads RKAL. 2 consecutive short sequence motifs (TEK-box) follow at residues 71-73 and 94-96; these read TEK. The SH3-binding signature appears at 163–173; it reads PPSPLKMPPLL. A Phosphoserine; by CDK1 modification is found at S165.

This sequence belongs to the securin family. Interacts with RPS10 and DNAJA1. Interacts with the caspase-like ESPL1, and prevents its protease activity probably by covering its active site. Interacts with TP53 and blocks its activity probably by blocking its binding to DNA. Interacts with the Ku 70 kDa subunit of ds-DNA kinase. Interacts with PTTG1IP. Phosphorylated at Ser-165 by CDK1 during mitosis. In terms of processing, phosphorylated in vitro by ds-DNA kinase. Post-translationally, ubiquitinated through 'Lys-11' linkage of ubiquitin moieties by the anaphase promoting complex (APC) at the onset of anaphase, conducting to its degradation. 'Lys-11'-linked ubiquitination is mediated by the E2 ligase UBE2C/UBCH10.

Its subcellular location is the cytoplasm. The protein resides in the nucleus. Its function is as follows. Regulatory protein, which plays a central role in chromosome stability, in the p53/TP53 pathway, and DNA repair. Probably acts by blocking the action of key proteins. During the mitosis, it blocks Separase/ESPL1 function, preventing the proteolysis of the cohesin complex and the subsequent segregation of the chromosomes. At the onset of anaphase, it is ubiquitinated, conducting to its destruction and to the liberation of ESPL1. Its function is however not limited to a blocking activity, since it is required to activate ESPL1. Negatively regulates the transcriptional activity and related apoptosis activity of TP53. The negative regulation of TP53 may explain the strong transforming capability of the protein when it is overexpressed. May also play a role in DNA repair via its interaction with Ku, possibly by connecting DNA damage-response pathways with sister chromatid separation. This Bos taurus (Bovine) protein is Securin (PTTG1).